A 300-amino-acid polypeptide reads, in one-letter code: Ribosomal protein bS6--L-glutamate ligase (300 aa).

Residues 104–287 enclose the ATP-grasp domain; it reads MQLLARQGID…IAGKMIRWIE (184 aa). Residues K141, 178 to 179, D187, and 211 to 213 each bind ATP; these read EY and RSN. Residues D248, E260, and N262 each coordinate Mg(2+). The Mn(2+) site is built by D248, E260, and N262.

The protein belongs to the RimK family. The cofactor is Mg(2+). It depends on Mn(2+) as a cofactor.

Functionally, an L-glutamate ligase that catalyzes the ATP-dependent post-translational addition of glutamate residues to the C-terminus of ribosomal protein bS6 (RpsF). Is also able to catalyze the synthesis of poly-alpha-glutamate in vitro, via ATP hydrolysis from unprotected glutamate as substrate. The number of glutamate residues added to either RpsF or to poly-alpha-glutamate changes with pH. This is Ribosomal protein bS6--L-glutamate ligase from Escherichia coli O139:H28 (strain E24377A / ETEC).